The sequence spans 101 residues: Small ribosomal subunit protein uS14 (101 aa).

The protein belongs to the universal ribosomal protein uS14 family. Part of the 30S ribosomal subunit. Contacts proteins S3 and S10.

Functionally, binds 16S rRNA, required for the assembly of 30S particles and may also be responsible for determining the conformation of the 16S rRNA at the A site. The sequence is that of Small ribosomal subunit protein uS14 from Caulobacter sp. (strain K31).